The following is a 1046-amino-acid chain: Translation initiation factor IF-2 (1046 aa).

The segment at 49 to 450 is disordered; sequence ALQQGNGGKA…GVMLPRGNGQ (402 aa). Composition is skewed to low complexity over residues 57 to 80 and 89 to 106; these read KAAPRKAAPAKPGAPSPAQAARPA and PAAAERPAAAERPAAAPA. Pro residues predominate over residues 107–128; that stretch reads APGPRPGPKPAPRPAPAAPAPA. Low complexity predominate over residues 129-169; that stretch reads APEFTAPPSAPAAPAAAASGPRPGARPGAPKPGGARPATPG. Basic and acidic residues predominate over residues 177–194; that stretch reads RGERTDRGDRGDRGDRQG. Positions 195–214 are enriched in low complexity; sequence AARPGGQAPRPGARPAGPRP. 2 stretches are compositionally biased toward gly residues: residues 239–248 and 266–280; these read PRPGGAGAPG and GGPGGAPRPQGGPGG. Positions 302–318 are enriched in low complexity; it reads GNRPNPGMMPQRPAAGP. Residues 319–414 show a composition bias toward gly residues; it reads RPGGGGPGGR…GTQGAFGRPG (96 aa). Residues 418 to 427 are compositionally biased toward basic residues; it reads RRGRKSKRQR. Residues 539 to 711 form the tr-type G domain; that stretch reads ARPPVVTVMG…VVLTADASLD (173 aa). Residues 548-555 are G1; sequence GHVDHGKT. 548-555 is a GTP binding site; it reads GHVDHGKT. Positions 573–577 are G2; the sequence is GITQH. The segment at 598–601 is G3; it reads DTPG. GTP contacts are provided by residues 598-602 and 652-655; these read DTPGH and NKID. A G4 region spans residues 652–655; the sequence is NKID. Residues 688 to 690 are G5; it reads SAK.

The protein belongs to the TRAFAC class translation factor GTPase superfamily. Classic translation factor GTPase family. IF-2 subfamily.

It localises to the cytoplasm. Functionally, one of the essential components for the initiation of protein synthesis. Protects formylmethionyl-tRNA from spontaneous hydrolysis and promotes its binding to the 30S ribosomal subunits. Also involved in the hydrolysis of GTP during the formation of the 70S ribosomal complex. This chain is Translation initiation factor IF-2, found in Streptomyces avermitilis (strain ATCC 31267 / DSM 46492 / JCM 5070 / NBRC 14893 / NCIMB 12804 / NRRL 8165 / MA-4680).